A 137-amino-acid polypeptide reads, in one-letter code: MQLVEQSKRATYIGTGRRKSSVARVRLVPGTGQLTINGKSGELYLQFNPTYLAIAKAPLESLGLENDYDILVNTSGGGLTGQADSIRLGVARALCQLDPENRKPLKVEGYLTRDPRAKERKKYGLRKARKAPQYSKR.

Residues 105–117 are compositionally biased toward basic and acidic residues; sequence LKVEGYLTRDPRA. Positions 105-137 are disordered; sequence LKVEGYLTRDPRAKERKKYGLRKARKAPQYSKR. Residues 118-137 are compositionally biased toward basic residues; sequence KERKKYGLRKARKAPQYSKR.

Belongs to the universal ribosomal protein uS9 family.

The polypeptide is Small ribosomal subunit protein uS9 (Cyanothece sp. (strain PCC 7425 / ATCC 29141)).